A 332-amino-acid chain; its full sequence is NADH-quinone oxidoreductase subunit H (332 aa).

A run of 9 helical transmembrane segments spans residues 8–28 (IIECILKIIVVLLIFSALAGF), 44–66 (IGPNYVGPYGLLQVVADGIKLFA), 78–98 (PIFILAPSIAAITAFIAMAPI), 120–140 (VGILFVLAVSSCGIYAPLLAG), 157–177 (IQFLSFEVITILSLLAPLMII), 196–216 (WLIFKQPLAFGLFIIAAYVEL), 245–265 (MFFIGEYANMFATAFILSLVF), 274–294 (FIPGGIAILLKVCFFIFLFMW), and 312–332 (WKIMLPLALLNVLITGCILLF).

It belongs to the complex I subunit 1 family. NDH-1 is composed of 14 different subunits. Subunits NuoA, H, J, K, L, M, N constitute the membrane sector of the complex.

The protein localises to the cell inner membrane. The enzyme catalyses a quinone + NADH + 5 H(+)(in) = a quinol + NAD(+) + 4 H(+)(out). Functionally, NDH-1 shuttles electrons from NADH, via FMN and iron-sulfur (Fe-S) centers, to quinones in the respiratory chain. The immediate electron acceptor for the enzyme in this species is believed to be ubiquinone. Couples the redox reaction to proton translocation (for every two electrons transferred, four hydrogen ions are translocated across the cytoplasmic membrane), and thus conserves the redox energy in a proton gradient. This subunit may bind ubiquinone. This chain is NADH-quinone oxidoreductase subunit H, found in Helicobacter hepaticus (strain ATCC 51449 / 3B1).